A 162-amino-acid chain; its full sequence is HTH-type transcriptional regulator IscR (162 aa).

Residues 2 to 131 (RLTSKGRYAV…NNITLGELVN (130 aa)) enclose the HTH rrf2-type domain. Positions 28–51 (LADISERQGISLSYLEQLFSRLRK) form a DNA-binding region, H-T-H motif. 3 residues coordinate [2Fe-2S] cluster: cysteine 92, cysteine 98, and cysteine 104. Positions 141 to 162 (RQHNEAHRPTRAQDAIDVKLRA) are disordered.

Requires [2Fe-2S] cluster as cofactor.

Regulates the transcription of several operons and genes involved in the biogenesis of Fe-S clusters and Fe-S-containing proteins. This is HTH-type transcriptional regulator IscR from Cronobacter sakazakii (strain ATCC BAA-894) (Enterobacter sakazakii).